Reading from the N-terminus, the 215-residue chain is Thymidylate kinase (215 aa).

Residue 12 to 19 (GIDGAGKS) coordinates ATP.

Belongs to the thymidylate kinase family.

It catalyses the reaction dTMP + ATP = dTDP + ADP. Functionally, phosphorylation of dTMP to form dTDP in both de novo and salvage pathways of dTTP synthesis. This Albidiferax ferrireducens (strain ATCC BAA-621 / DSM 15236 / T118) (Rhodoferax ferrireducens) protein is Thymidylate kinase.